The sequence spans 95 residues: Aspartyl/glutamyl-tRNA(Asn/Gln) amidotransferase subunit C (95 aa).

It belongs to the GatC family. In terms of assembly, heterotrimer of A, B and C subunits.

The enzyme catalyses L-glutamyl-tRNA(Gln) + L-glutamine + ATP + H2O = L-glutaminyl-tRNA(Gln) + L-glutamate + ADP + phosphate + H(+). It carries out the reaction L-aspartyl-tRNA(Asn) + L-glutamine + ATP + H2O = L-asparaginyl-tRNA(Asn) + L-glutamate + ADP + phosphate + 2 H(+). In terms of biological role, allows the formation of correctly charged Asn-tRNA(Asn) or Gln-tRNA(Gln) through the transamidation of misacylated Asp-tRNA(Asn) or Glu-tRNA(Gln) in organisms which lack either or both of asparaginyl-tRNA or glutaminyl-tRNA synthetases. The reaction takes place in the presence of glutamine and ATP through an activated phospho-Asp-tRNA(Asn) or phospho-Glu-tRNA(Gln). This is Aspartyl/glutamyl-tRNA(Asn/Gln) amidotransferase subunit C from Dinoroseobacter shibae (strain DSM 16493 / NCIMB 14021 / DFL 12).